Here is a 100-residue protein sequence, read N- to C-terminus: ATP-dependent Clp protease adapter protein ClpS (100 aa).

It belongs to the ClpS family. In terms of assembly, binds to the N-terminal domain of the chaperone ClpA.

Its function is as follows. Involved in the modulation of the specificity of the ClpAP-mediated ATP-dependent protein degradation. The protein is ATP-dependent Clp protease adapter protein ClpS of Nitratidesulfovibrio vulgaris (strain DSM 19637 / Miyazaki F) (Desulfovibrio vulgaris).